The following is a 535-amino-acid chain: CTP synthase (535 aa).

Residues 1 to 268 (MSTKYIFVTG…DQIVCDHLKL (268 aa)) form an amidoligase domain region. CTP is bound at residue serine 14. Serine 14 provides a ligand contact to UTP. 15–20 (SMGKGI) provides a ligand contact to ATP. Position 55 (tyrosine 55) interacts with L-glutamine. Residue aspartate 72 participates in ATP binding. Mg(2+)-binding residues include aspartate 72 and glutamate 142. CTP contacts are provided by residues 149 to 151 (DME), 189 to 194 (KTKIAQ), and lysine 225. UTP-binding positions include 189–194 (KTKIAQ) and lysine 225. Valine 243 is a binding site for ATP. Positions 293–535 (KIALVGKYVE…FIRVAVENSK (243 aa)) constitute a Glutamine amidotransferase type-1 domain. Glycine 355 serves as a coordination point for L-glutamine. The active-site Nucleophile; for glutamine hydrolysis is the cysteine 382. L-glutamine-binding positions include 383–386 (LGMQ), glutamate 406, and arginine 464. Catalysis depends on residues histidine 509 and glutamate 511.

It belongs to the CTP synthase family. Homotetramer. In contrast to E.coli CTP synthase, remains a tetramer at dilute enzyme concentrations even in the absence of Mg(2+), ATP and UTP.

The enzyme catalyses UTP + L-glutamine + ATP + H2O = CTP + L-glutamate + ADP + phosphate + 2 H(+). It catalyses the reaction L-glutamine + H2O = L-glutamate + NH4(+). It carries out the reaction UTP + NH4(+) + ATP = CTP + ADP + phosphate + 2 H(+). Its pathway is pyrimidine metabolism; CTP biosynthesis via de novo pathway; CTP from UDP: step 2/2. With respect to regulation, allosterically activated by GTP, when glutamine is the substrate. GTP has no effect on the reaction when ammonia is the substrate. The allosteric effector GTP functions by stabilizing the protein conformation that binds the tetrahedral intermediate(s) formed during glutamine hydrolysis. Also activated by magnesium. Allosterically inhibited by CTP. Functionally, catalyzes the ATP-dependent amination of UTP to CTP with either L-glutamine or ammonia as the source of nitrogen. Is essential for the synthesis of CTP de novo. Contrary to other bacterial CTP synthases, the lactococcal enzyme is also able to convert dUTP to dCTP, but this reaction may not play a significant physiological role. Regulates intracellular CTP levels through interactions with the four ribonucleotide triphosphates. In Lactococcus lactis subsp. cremoris (strain MG1363), this protein is CTP synthase.